A 798-amino-acid chain; its full sequence is Peroxisome proliferator-activated receptor gamma coactivator 1-alpha (798 aa).

The residue at position 79 (lysine 79) is an N6-acetyllysine. The tract at residues 100 to 140 (PVDEDGLPSFDALTDGDVTTDNEASPSSMPDGTPPPQEAEE) is disordered. The segment covering 116 to 129 (DVTTDNEASPSSMP) has biased composition (polar residues). Residues 144–148 (LKKLL) carry the LXXLL motif motif. Lysine 146 is modified (N6-acetyllysine). Threonine 178 is subject to Phosphothreonine; by AMPK. Residue lysine 184 is modified to N6-acetyllysine. Positions 213 to 277 (YLTTNDDPPH…NDPKGSPFEN (65 aa)) are disordered. The segment covering 219-237 (DPPHTKPTENRNSSRDKCT) has biased composition (basic and acidic residues). 4 positions are modified to N6-acetyllysine: lysine 254, lysine 271, lysine 278, and lysine 321. The segment at 290 to 351 (GTAGLTPPTT…NNSTKKGPEQ (62 aa)) is disordered. Positions 293-339 (GLTPPTTPPHKANQDNPFRASPKLKSSCKTVVPPPSKKPRYSESSGT) are interaction with PPARG. Positions 334-346 (SESSGTQGNNSTK) are enriched in polar residues. Lysine 347, lysine 413, lysine 442, and lysine 451 each carry N6-acetyllysine. Residues 350 to 798 (EQSELYAQLS…LKEAQRSLRR (449 aa)) form a mediates interaction with RNF34 region. A Phosphoserine; by AMPK modification is found at serine 539. Disordered stretches follow at residues 542 to 599 (SFNS…SSRS), 613 to 639 (HRNS…SYEE), and 650 to 669 (YRRE…ERQR). Over residues 563–578 (QRMRSRSRSFSRHRSC) the composition is skewed to basic residues. The span at 579–599 (SRSPYSRSRSRSPGSRSSSRS) shows a compositional bias: low complexity. Positions 622 to 631 (SRSRSPYSRR) are enriched in basic residues. In terms of domain architecture, RRM spans 677-753 (RVIYVGKIRP…TDFELYFCGR (77 aa)). N6-acetyllysine is present on residues lysine 758 and lysine 779.

Homooligomer. Interacts with MYBBP1A; inhibits MYBBP1A transcriptional activation. Interacts with PRDM16, LPIN1 and PML. Interacts (via LXXLL motif) with RORA and RORC (via AF-2 motif); activates RORA and RORC transcriptional activation. Interacts with LRPPRC. Interacts with FOXO1. Interacts with NR5A2. Post-translationally, phosphorylation by AMPK in skeletal muscle increases activation of its own promoter. Phosphorylated by CLK2. In terms of processing, heavily acetylated by KAT2A/GCN5 under conditions of high nutrients, leading to inactivation of PPARGC1A. Deacetylated by SIRT1 in low nutrients/high NAD conditions, leading to its activation. Ubiquitinated. Ubiquitination by RNF34 induces proteasomal degradation. Heart, skeletal muscle, liver and kidney. Expressed at lower levels in brain and pancreas and at very low levels in the intestine and white adipose tissue. In skeletal muscle, levels were lower in obese than in lean subjects and fasting induced a 2-fold increase in levels in the skeletal muscle in obese subjects.

Its subcellular location is the nucleus. It localises to the PML body. It is found in the cytoplasm. Transcriptional coactivator for steroid receptors and nuclear receptors. Greatly increases the transcriptional activity of PPARG and thyroid hormone receptor on the uncoupling protein promoter. Can regulate key mitochondrial genes that contribute to the program of adaptive thermogenesis. Plays an essential role in metabolic reprogramming in response to dietary availability through coordination of the expression of a wide array of genes involved in glucose and fatty acid metabolism. Acts as a key regulator of gluconeogenesis: stimulates hepatic gluconeogenesis by increasing the expression of gluconeogenic enzymes, and acting together with FOXO1 to promote the fasting gluconeogenic program. Induces the expression of PERM1 in the skeletal muscle in an ESRRA-dependent manner. Also involved in the integration of the circadian rhythms and energy metabolism. Required for oscillatory expression of clock genes, such as BMAL1 and NR1D1, through the coactivation of RORA and RORC, and metabolic genes, such as PDK4 and PEPCK. In Homo sapiens (Human), this protein is Peroxisome proliferator-activated receptor gamma coactivator 1-alpha (PPARGC1A).